Reading from the N-terminus, the 370-residue chain is ADP-ribosylation factor-like protein 13B (370 aa).

4 S-palmitoyl cysteine lipidation sites follow: cysteine 12, cysteine 13, cysteine 14, and cysteine 15. GTP contacts are provided by residues 31 to 38 (GIGSAGKT), 75 to 79 (DVGGD), and 134 to 137 (NNQN). A Glycyl lysine isopeptide (Lys-Gly) (interchain with G-Cter in SUMO) cross-link involves residue lysine 239. Residues 255 to 331 (RNQPPVQPPI…PVSPESNSVK (77 aa)) form a disordered region. Over residues 259–271 (PVQPPIPPDPPSD) the composition is skewed to pro residues. 2 stretches are compositionally biased toward polar residues: residues 287-303 (LASSTIPSDIIQSTPET) and 314-328 (RISQTSTKPVSPESN). Lysine 331 participates in a covalent cross-link: Glycyl lysine isopeptide (Lys-Gly) (interchain with G-Cter in SUMO). The interval 366–369 (RVVP) is RVVP region.

The protein belongs to the small GTPase superfamily. Arf family. In terms of assembly, monomer. Sumoylation regulates the targeting of membrane sensory receptors to the cilium. As to expression, specifically expressed in ciliated sensory neurons throughout development in both hermaphrodites.

Its subcellular location is the cell projection. The protein resides in the cilium membrane. Cilium-specific protein required to control the microtubule-based, ciliary axoneme structure. Required for normal sensory cilium function. May act by maintaining the association between IFT subcomplexes A and B. This chain is ADP-ribosylation factor-like protein 13B (arl-13), found in Caenorhabditis elegans.